The sequence spans 187 residues: Protein dj-1beta (187 aa).

Cys-45 carries the cysteine sulfinic acid (-SO2H) modification. Cys-104 functions as the Nucleophile in the catalytic mechanism. Cys-104 carries the post-translational modification Cysteine sulfinic acid (-SO2H); alternate.

Post-translationally, oxidation of Cys-45 and Cys-104 in response to oxidative stress. Levels of oxidation increase with age. Expressed in the head and testis (at protein level). Ubiquitously expressed at constant levels.

It localises to the mitochondrion. The protein resides in the cytoplasm. The protein localises to the nucleus. Plays an important role in cell protection against oxidative stress and cell death by acting as a oxidative stress sensor. Does not play a role in methylglyoxal detoxification. Plays a role in mitochondrial function together with Pink1. In motor neurons regulates structural synaptic plasticity of locomotor behavior as part of the PTEN-phosphatidylinositol 3-kinase pathway in response to oxygen species (ROS) levels. The sequence is that of Protein dj-1beta from Drosophila melanogaster (Fruit fly).